The primary structure comprises 480 residues: Cysteine--tRNA ligase (480 aa).

Cysteine 29 is a Zn(2+) binding site. Positions 31 to 41 (PTVYADPHLGH) match the 'HIGH' region motif. Zn(2+) is bound by residues cysteine 220, histidine 245, and glutamate 249. The short motif at 276 to 280 (KMAKS) is the 'KMSKS' region element. Lysine 279 contributes to the ATP binding site.

This sequence belongs to the class-I aminoacyl-tRNA synthetase family. In terms of assembly, monomer. Requires Zn(2+) as cofactor.

It is found in the cytoplasm. It catalyses the reaction tRNA(Cys) + L-cysteine + ATP = L-cysteinyl-tRNA(Cys) + AMP + diphosphate. The chain is Cysteine--tRNA ligase from Thermus thermophilus (strain ATCC 27634 / DSM 579 / HB8).